The sequence spans 69 residues: ATP synthase F(0) complex subunit e, mitochondrial (69 aa).

Residue Lys-34 is modified to N6-acetyllysine. Phosphoserine is present on Ser-66.

The protein belongs to the ATPase e subunit family. As to quaternary structure, component of the ATP synthase complex composed at least of ATP5F1A/subunit alpha, ATP5F1B/subunit beta, ATP5MC1/subunit c (homooctomer), MT-ATP6/subunit a, MT-ATP8/subunit 8, ATP5ME/subunit e, ATP5MF/subunit f, ATP5MG/subunit g, ATP5MK/subunit k, ATP5MJ/subunit j, ATP5F1C/subunit gamma, ATP5F1D/subunit delta, ATP5F1E/subunit epsilon, ATP5PF/subunit F6, ATP5PB/subunit b, ATP5PD/subunit d, ATP5PO/subunit OSCP. ATP synthase complex consists of a soluble F(1) head domain (subunits alpha(3) and beta(3)) - the catalytic core - and a membrane F(0) domain - the membrane proton channel (subunits c, a, 8, e, f, g, k and j). These two domains are linked by a central stalk (subunits gamma, delta, and epsilon) rotating inside the F1 region and a stationary peripheral stalk (subunits F6, b, d, and OSCP).

The protein resides in the mitochondrion. Its subcellular location is the mitochondrion inner membrane. Functionally, subunit e, of the mitochondrial membrane ATP synthase complex (F(1)F(0) ATP synthase or Complex V) that produces ATP from ADP in the presence of a proton gradient across the membrane which is generated by electron transport complexes of the respiratory chain. ATP synthase complex consist of a soluble F(1) head domain - the catalytic core - and a membrane F(1) domain - the membrane proton channel. These two domains are linked by a central stalk rotating inside the F(1) region and a stationary peripheral stalk. During catalysis, ATP synthesis in the catalytic domain of F(1) is coupled via a rotary mechanism of the central stalk subunits to proton translocation. In vivo, can only synthesize ATP although its ATP hydrolase activity can be activated artificially in vitro. Part of the complex F(0) domain. In Homo sapiens (Human), this protein is ATP synthase F(0) complex subunit e, mitochondrial.